The sequence spans 395 residues: Levanbiose-producing levanase (395 aa).

Asp1 is a catalytic residue. Substrate is bound by residues 59 to 60, 124 to 125, Glu173, and Trp261; these read WT and RD.

The protein belongs to the glycosyl hydrolase 32 family.

It localises to the membrane. The enzyme catalyses Hydrolysis of (2-&gt;6)-beta-D-fructofuranan, to remove successive disaccharide residues as levanbiose, i.e. 6-(beta-D-fructofuranosyl)-D-fructose, from the end of the chain.. In terms of biological role, catalyzes the degradation of levan mainly into levanbiose (difructose). Can also hydrolyze inulin. The chain is Levanbiose-producing levanase (levB) from Geobacillus stearothermophilus (Bacillus stearothermophilus).